A 66-amino-acid chain; its full sequence is Large ribosomal subunit protein bL35 (66 aa).

The tract at residues 21-40 is disordered; the sequence is KIKSTQSAKRHGMTKRSKRS. Basic residues predominate over residues 28–40; the sequence is AKRHGMTKRSKRS.

Belongs to the bacterial ribosomal protein bL35 family.

In Ehrlichia canis (strain Jake), this protein is Large ribosomal subunit protein bL35.